A 165-amino-acid polypeptide reads, in one-letter code: uncharacterized protein (165 aa).

It belongs to the SixA phosphatase family.

This is an uncharacterized protein from Picosynechococcus sp. (strain ATCC 27264 / PCC 7002 / PR-6) (Agmenellum quadruplicatum).